The primary structure comprises 428 residues: Sarcosine reductase complex component B subunit alpha (428 aa).

Cys242 is modified (pyruvic acid (Cys)).

As to quaternary structure, heterotetramer of two alpha and two beta subunits. Component of the sarcosine reductase complex, together with components A and C. PB is substrate specific. The peptide chain is cleaved into beta and alpha chains, and the alpha chain N-terminal cysteine is deaminated and oxidized to form a reactive pyruvoyl group.

It carries out the reaction acetyl phosphate + methylamine + [thioredoxin]-disulfide + H2O = sarcosine + [thioredoxin]-dithiol + phosphate + H(+). In the first step of sarcosine reductase, the substrate is bound to component PB via a Schiff base intermediate. Then the PB-activated substrate is nucleophilically attacked by the selenol anion of component PA to transform it to a carboxymethylated selenoether and the respective amine. By action of component PC, acetyl phosphate is formed, leaving component PA in its oxidized state. Finally component PA becomes reduced by the thioredoxin system to start a new catalytic cycle of reductive deamination. The chain is Sarcosine reductase complex component B subunit alpha (grdG) from Peptoclostridium acidaminophilum (Eubacterium acidaminophilum).